The following is a 442-amino-acid chain: Probable glycine dehydrogenase (decarboxylating) subunit 1 (442 aa).

The protein belongs to the GcvP family. N-terminal subunit subfamily. The glycine cleavage system is composed of four proteins: P, T, L and H. In this organism, the P 'protein' is a heterodimer of two subunits.

It catalyses the reaction N(6)-[(R)-lipoyl]-L-lysyl-[glycine-cleavage complex H protein] + glycine + H(+) = N(6)-[(R)-S(8)-aminomethyldihydrolipoyl]-L-lysyl-[glycine-cleavage complex H protein] + CO2. Its function is as follows. The glycine cleavage system catalyzes the degradation of glycine. The P protein binds the alpha-amino group of glycine through its pyridoxal phosphate cofactor; CO(2) is released and the remaining methylamine moiety is then transferred to the lipoamide cofactor of the H protein. The sequence is that of Probable glycine dehydrogenase (decarboxylating) subunit 1 from Phenylobacterium zucineum (strain HLK1).